Here is a 384-residue protein sequence, read N- to C-terminus: Spermidine/putrescine import ATP-binding protein PotA (384 aa).

The 233-residue stretch at 6-238 (ITFNNVSKTF…PINHFVANFI (233 aa)) folds into the ABC transporter domain. 40-47 (GASGSGKS) is an ATP binding site.

It belongs to the ABC transporter superfamily. Spermidine/putrescine importer (TC 3.A.1.11.1) family. The complex is composed of two ATP-binding proteins (PotA), two transmembrane proteins (PotB and PotC) and a solute-binding protein (PotD).

The protein resides in the cell membrane. It carries out the reaction ATP + H2O + polyamine-[polyamine-binding protein]Side 1 = ADP + phosphate + polyamineSide 2 + [polyamine-binding protein]Side 1.. Functionally, part of the ABC transporter complex PotABCD involved in spermidine/putrescine import. Responsible for energy coupling to the transport system. In Streptococcus pyogenes serotype M18 (strain MGAS8232), this protein is Spermidine/putrescine import ATP-binding protein PotA.